Reading from the N-terminus, the 1115-residue chain is Carbamoyl phosphate synthase large chain (1115 aa).

Residues 1–407 (MPRRTDLHHV…ALGKVMRSLE (407 aa)) are carboxyphosphate synthetic domain. ATP-binding residues include Arg-134, Arg-174, Gly-180, Gly-181, Glu-213, Ile-215, Glu-220, Gly-246, Val-247, His-248, Gln-290, and Glu-304. An ATP-grasp 1 domain is found at 138 to 333 (KDIVAKAGGE…IAKIAAKLAI (196 aa)). Mg(2+) contacts are provided by Gln-290, Glu-304, and Asn-306. Residues Gln-290, Glu-304, and Asn-306 each coordinate Mn(2+). An oligomerization domain region spans residues 408–559 (TTRAGFWTAP…ELDPAAETEV (152 aa)). Residues 560-965 (APQTERPKVL…AFAKSQTAAY (406 aa)) form a carbamoyl phosphate synthetic domain region. One can recognise an ATP-grasp 2 domain in the interval 693–884 (GDLLSAAGLP…LAKACARIML (192 aa)). ATP is bound by residues Arg-729, Arg-768, Leu-770, Glu-775, Gly-800, Ile-801, His-802, Ser-803, Gln-843, and Glu-855. The Mg(2+) site is built by Gln-843, Glu-855, and Asn-857. Residues Gln-843, Glu-855, and Asn-857 each contribute to the Mn(2+) site. The MGS-like domain occupies 966–1113 (GSLPAQGTVF…QELHRVIGGV (148 aa)). The interval 966–1115 (GSLPAQGTVF…LHRVIGGVER (150 aa)) is allosteric domain.

This sequence belongs to the CarB family. In terms of assembly, composed of two chains; the small (or glutamine) chain promotes the hydrolysis of glutamine to ammonia, which is used by the large (or ammonia) chain to synthesize carbamoyl phosphate. Tetramer of heterodimers (alpha,beta)4. Mg(2+) is required as a cofactor. The cofactor is Mn(2+).

It catalyses the reaction hydrogencarbonate + L-glutamine + 2 ATP + H2O = carbamoyl phosphate + L-glutamate + 2 ADP + phosphate + 2 H(+). It carries out the reaction hydrogencarbonate + NH4(+) + 2 ATP = carbamoyl phosphate + 2 ADP + phosphate + 2 H(+). Its pathway is amino-acid biosynthesis; L-arginine biosynthesis; carbamoyl phosphate from bicarbonate: step 1/1. It functions in the pathway pyrimidine metabolism; UMP biosynthesis via de novo pathway; (S)-dihydroorotate from bicarbonate: step 1/3. Its function is as follows. Large subunit of the glutamine-dependent carbamoyl phosphate synthetase (CPSase). CPSase catalyzes the formation of carbamoyl phosphate from the ammonia moiety of glutamine, carbonate, and phosphate donated by ATP, constituting the first step of 2 biosynthetic pathways, one leading to arginine and/or urea and the other to pyrimidine nucleotides. The large subunit (synthetase) binds the substrates ammonia (free or transferred from glutamine from the small subunit), hydrogencarbonate and ATP and carries out an ATP-coupled ligase reaction, activating hydrogencarbonate by forming carboxy phosphate which reacts with ammonia to form carbamoyl phosphate. In Mycobacterium bovis (strain ATCC BAA-935 / AF2122/97), this protein is Carbamoyl phosphate synthase large chain.